We begin with the raw amino-acid sequence, 686 residues long: Osmo-dependent choline transporter BetT2 (686 aa).

At 1 to 22 (MATDNPRAVDDQETHPKDRLNR) the chain is on the cytoplasmic side. Residues 23-43 (VVFYVSALIILIFSLTTILFN) form a helical membrane-spanning segment. The Periplasmic portion of the chain corresponds to 44–60 (DFANRALNQVLDWVSST). The helical transmembrane segment at 61–81 (FSWYYLLAATLYMVFVIFIAC) threads the bilayer. Residues 82 to 100 (SRYGNIKLGPKHSKPEFSL) are Cytoplasmic-facing. A helical transmembrane segment spans residues 101–121 (LSWSAMLFSAGIGIDLMFFSV). The Periplasmic segment spans residues 122–150 (AEPLSHYMHPPVGEGQTYEAARQGMVWTL). The helical transmembrane segment at 151-171 (FHYGLTGWCMYALIGMALGYF) threads the bilayer. Residues 172-203 (SYRYNLPLTIRSALYPIFGKKINGPIGHSVDT) are Cytoplasmic-facing. Residues 204-224 (AAVIGTIFGIATTCGIGVVQL) traverse the membrane as a helical segment. Over 225-237 (NYGLHVLFDLPEN) the chain is Periplasmic. A helical transmembrane segment spans residues 238 to 258 (LWVQTALILVAVIITIISVTS). The Cytoplasmic segment spans residues 259–265 (GVNKGLR). Residues 266-286 (ILSEVNIYVSVGLMLFILFLG) form a helical membrane-spanning segment. Topologically, residues 287 to 325 (NTEFLLNALVQNVGDYLSRFPSLALESFAFDQPKEWMNS) are periplasmic. The helical transmembrane segment at 326 to 346 (WTLFFWAWWVAWSPFVGLFLA) threads the bilayer. Over 347–356 (RISRGRTIRE) the chain is Cytoplasmic. Residues 357–377 (FVSGTLIIPLLFTLTWLSIFG) traverse the membrane as a helical segment. Residues 378-412 (NSALHNVIFDGNIALAETVLSNPAHGFYDLLAQYP) are Periplasmic-facing. Residues 413-433 (WFPFIAGVATITGLLFYVTSA) form a helical membrane-spanning segment. The Cytoplasmic portion of the chain corresponds to 434 to 459 (DSGALVLGNFTTQFTNIDHDAPRWLS). The helical transmembrane segment at 460–480 (VFWAVAIGLLTLAMLMTNGIT) threads the bilayer. At 481–484 (ALQN) the chain is on the periplasmic side. Residues 485–505 (ATIIMGLPFSFVMFLVMAGLY) traverse the membrane as a helical segment. The Cytoplasmic segment spans residues 506-686 (KSLRLEDYRQ…NRPLFPDPKA (181 aa)).

The protein belongs to the BCCT transporter (TC 2.A.15) family.

It localises to the cell inner membrane. Functionally, uptake of choline in the presence of high salinity. May primarily serve for osmoprotection. The protein is Osmo-dependent choline transporter BetT2 of Acinetobacter baylyi (strain ATCC 33305 / BD413 / ADP1).